We begin with the raw amino-acid sequence, 1154 residues long: DNA-directed RNA polymerase subunit beta (1154 aa).

The span at 1108 to 1123 shows a compositional bias: basic and acidic residues; the sequence is ELGIDIQGEDRSERAG. Positions 1108–1136 are disordered; sequence ELGIDIQGEDRSERAGEPASPDEMDDEEE. Over residues 1127–1136 the composition is skewed to acidic residues; that stretch reads SPDEMDDEEE.

The protein belongs to the RNA polymerase beta chain family. The RNAP catalytic core consists of 2 alpha, 1 beta, 1 beta' and 1 omega subunit. When a sigma factor is associated with the core the holoenzyme is formed, which can initiate transcription.

The catalysed reaction is RNA(n) + a ribonucleoside 5'-triphosphate = RNA(n+1) + diphosphate. Its function is as follows. DNA-dependent RNA polymerase catalyzes the transcription of DNA into RNA using the four ribonucleoside triphosphates as substrates. The sequence is that of DNA-directed RNA polymerase subunit beta from Heliobacterium modesticaldum (strain ATCC 51547 / Ice1).